The chain runs to 454 residues: Tubulin alpha-A chain (454 aa).

8 residues coordinate GTP: glutamine 12, aspartate 72, serine 141, glycine 145, threonine 146, threonine 180, asparagine 207, and asparagine 229. Aspartate 72 contributes to the Mg(2+) binding site. Glutamate 255 is a catalytic residue.

This sequence belongs to the tubulin family. As to quaternary structure, dimer of alpha and beta chains. A typical microtubule is a hollow water-filled tube with an outer diameter of 25 nm and an inner diameter of 15 nM. Alpha-beta heterodimers associate head-to-tail to form protofilaments running lengthwise along the microtubule wall with the beta-tubulin subunit facing the microtubule plus end conferring a structural polarity. Microtubules usually have 13 protofilaments but different protofilament numbers can be found in some organisms and specialized cells. Mg(2+) is required as a cofactor.

It localises to the cytoplasm. Its subcellular location is the cytoskeleton. The enzyme catalyses GTP + H2O = GDP + phosphate + H(+). Tubulin is the major constituent of microtubules, a cylinder consisting of laterally associated linear protofilaments composed of alpha- and beta-tubulin heterodimers. Microtubules grow by the addition of GTP-tubulin dimers to the microtubule end, where a stabilizing cap forms. Below the cap, tubulin dimers are in GDP-bound state, owing to GTPase activity of alpha-tubulin. The sequence is that of Tubulin alpha-A chain (tba-1) from Neurospora crassa (strain ATCC 24698 / 74-OR23-1A / CBS 708.71 / DSM 1257 / FGSC 987).